A 53-amino-acid chain; its full sequence is Rubredoxin (53 aa).

Positions 1 to 53 (MQKFECTLCGYIYDPALVGPDTPDQDGAFEDVSENWVCPLCGAGKEDFEVYED) constitute a Rubredoxin-like domain. Residues C6, C9, C38, and C41 each coordinate Fe cation.

This sequence belongs to the rubredoxin family. Fe(3+) serves as cofactor.

In terms of biological role, rubredoxin is a small nonheme, iron protein lacking acid-labile sulfide. Its single Fe, chelated to 4 Cys, functions as an electron acceptor and may also stabilize the conformation of the molecule. In Peptoniphilus asaccharolyticus (Peptostreptococcus asaccharolyticus), this protein is Rubredoxin.